The chain runs to 436 residues: Histone acetyltransferase RTT109 (436 aa).

Residues 2–404 form the Rtt109-type HAT domain; it reads SLNDFLSSVL…LQSLTGKREH (403 aa). Residues 88–90 and 97–101 each bind acetyl-CoA; these read ADT and RVSVR. An interaction with VPS75 region spans residues 128 to 170; that stretch reads RSYKKISPELISAASTPARTLRILARRLKQSGSTVLKEIESPR. Residues phenylalanine 192, alanine 196, 211–213, and tryptophan 221 each bind acetyl-CoA; that span reads HIL. The active-site Proton donor/acceptor is aspartate 288. An N6-acetyllysine; by autocatalysis modification is found at lysine 290. Positions 419–433 are interaction with ASF1; it reads LAITMLKPRKKAKAL.

It belongs to the RTT109 family. As to quaternary structure, forms a complex composed of two RTT109 subunits and one VPS75 homodimer; each RTT109 subunit interacts predominantly with VPS75 instead of interacting with the other RTT109 subunit. Interacts with VPS75; the interaction is direct. Interacts (via C-terminus) with ASF1; the interaction is direct. Interacts with histone H3/H4 heterodimers via histone H3.

It localises to the nucleus. The enzyme catalyses L-lysyl-[histone] + acetyl-CoA = N(6)-acetyl-L-lysyl-[histone] + CoA + H(+). It carries out the reaction L-lysyl-[protein] + acetyl-CoA = N(6)-acetyl-L-lysyl-[protein] + CoA + H(+). Histone chaperone-dependent acetylase that modifies 'Lys-9', 'Lys-14', 'Lys-23', 'Lys-27', and 'Lys-56' on histone H3 (H3K9Ac, H3K14Ac and H3K23Ac, H3K27Ac, and H3K56Ac) to promote nucleosome assembly, genomic stability, DNA repair and transcriptional regulation during mitotic S-phase. Its residue selectivity is influenced by the acetylation status of histone H3, and also the presence of histone chaperone ASF1 that shifts selectivity to 'Lys-56' when H3K14Ac is already present. H3K56 acetylation weakens the interaction between the histone core and the surrounding DNA in the nucleosomal particle and drives chromatin disassembly. Autoacetylates. Independently of acetyltransferase activity, stimulates histone deposition by VPS75. Involved in regulation of Ty1 transposition. The chain is Histone acetyltransferase RTT109 from Saccharomyces cerevisiae (strain ATCC 204508 / S288c) (Baker's yeast).